The following is an 848-amino-acid chain: Leucine--tRNA ligase (848 aa).

The short motif at 41–51 is the 'HIGH' region element; that stretch reads PYPSGRIHMGH. A 'KMSKS' region motif is present at residues 619–623; that stretch reads KMSKS. Lysine 622 serves as a coordination point for ATP.

Belongs to the class-I aminoacyl-tRNA synthetase family.

The protein localises to the cytoplasm. It carries out the reaction tRNA(Leu) + L-leucine + ATP = L-leucyl-tRNA(Leu) + AMP + diphosphate. The chain is Leucine--tRNA ligase from Roseobacter denitrificans (strain ATCC 33942 / OCh 114) (Erythrobacter sp. (strain OCh 114)).